The sequence spans 488 residues: Protein unzipped (488 aa).

The signal sequence occupies residues 1-21 (MTSNSCLISLGLLLVLIQILA). At 22–465 (PAKAAEHSVF…DVALAGFGVN (444 aa)) the chain is on the extracellular side. N-linked (GlcNAc...) asparagine glycans are attached at residues N35, N232, N317, and N374. Positions 380 to 400 (TTTTTTTTSTSTTTHATTTST) are enriched in low complexity. A disordered region spans residues 380 to 453 (TTTTTTTTST…EAPENMSSDP (74 aa)). Residue N448 is glycosylated (N-linked (GlcNAc...) asparagine). Residues 466 to 486 (AAGSTFIAGSALLTLLLTIFL) traverse the membrane as a helical segment. At 487–488 (SL) the chain is on the cytoplasmic side.

The protein localises to the membrane. In terms of biological role, required for normal axon patterning during neurogenesis. This Drosophila melanogaster (Fruit fly) protein is Protein unzipped (uzip).